Reading from the N-terminus, the 852-residue chain is G-type lectin S-receptor-like serine/threonine-protein kinase At4g03230 (852 aa).

Residues M1–C19 form the signal peptide. A Bulb-type lectin domain is found at F20–S154. Topologically, residues F20–K444 are extracellular. N37, N59, N171, N187, N234, and N243 each carry an N-linked (GlcNAc...) asparagine glycan. Positions P285 to E321 constitute an EGF-like domain. Cystine bridges form between C289–C301 and C295–C309. The PAN domain occupies C339 to V426. N-linked (GlcNAc...) asparagine glycosylation occurs at N352. Intrachain disulfides connect C373-C400 and C377-C383. Residues T445 to S465 form a helical membrane-spanning segment. The Cytoplasmic portion of the chain corresponds to S466–R852. Residues F532–F819 form the Protein kinase domain. ATP-binding positions include L538–V546 and K560. S566 bears the Phosphoserine mark. Residues K621 to I638 form a caM-binding region. The Proton acceptor role is filled by D657. A phosphoserine mark is found at S661 and S674. At T691 the chain carries Phosphothreonine. The segment at S826 to R852 is disordered. 2 positions are modified to phosphoserine: S831 and S840. Residues T834–T845 are compositionally biased toward polar residues. Position 847 is a phosphothreonine (T847).

This sequence belongs to the protein kinase superfamily. Ser/Thr protein kinase family.

It localises to the cell membrane. It carries out the reaction L-seryl-[protein] + ATP = O-phospho-L-seryl-[protein] + ADP + H(+). It catalyses the reaction L-threonyl-[protein] + ATP = O-phospho-L-threonyl-[protein] + ADP + H(+). This Arabidopsis thaliana (Mouse-ear cress) protein is G-type lectin S-receptor-like serine/threonine-protein kinase At4g03230.